A 302-amino-acid chain; its full sequence is Oxygen-dependent coproporphyrinogen-III oxidase (302 aa).

Ser90 is a binding site for substrate. 2 residues coordinate a divalent metal cation: His94 and His104. Catalysis depends on His104, which acts as the Proton donor. 106–108 (NVR) lines the substrate pocket. The a divalent metal cation site is built by His143 and His173. An important for dimerization region spans residues 238-273 (YVEFNLIYDRGTIFGLQSNGRTESILLSMPPIVKWR).

Belongs to the aerobic coproporphyrinogen-III oxidase family. In terms of assembly, homodimer. A divalent metal cation serves as cofactor.

It is found in the cytoplasm. The catalysed reaction is coproporphyrinogen III + O2 + 2 H(+) = protoporphyrinogen IX + 2 CO2 + 2 H2O. The protein operates within porphyrin-containing compound metabolism; protoporphyrin-IX biosynthesis; protoporphyrinogen-IX from coproporphyrinogen-III (O2 route): step 1/1. In terms of biological role, involved in the heme biosynthesis. Catalyzes the aerobic oxidative decarboxylation of propionate groups of rings A and B of coproporphyrinogen-III to yield the vinyl groups in protoporphyrinogen-IX. The chain is Oxygen-dependent coproporphyrinogen-III oxidase from Methylobacillus flagellatus (strain ATCC 51484 / DSM 6875 / VKM B-1610 / KT).